Consider the following 428-residue polypeptide: Putative POM121-like protein 1 (428 aa).

Disordered stretches follow at residues 1-23 (MDSLWGPGAGSHPFGVHNSRLSP), 36-204 (KESG…KFPL), 254-293 (DCRPSRPSHTLSSLATGASGLPAVSKAPSMDAQQERHKSQ), 306-384 (TEVP…PSTL), and 402-428 (GPQPQLQQVPRGQNQRSQTSRTSSCPK). Basic and acidic residues predominate over residues 44–62 (EQDKDPRVQENPGDQRRVP). Over residues 106-117 (QTSQTSWTSSCT) the composition is skewed to low complexity. Composition is skewed to polar residues over residues 118–129 (NRNAISSSYSST), 144–155 (SHCQLTLSSSKT), 260–269 (PSHTLSSLAT), 326–347 (FSSSDPLPATSSHSQDSAQVTS), and 403–415 (PQPQLQQVPRGQN). A compositionally biased stretch (low complexity) spans 416–428 (QRSQTSRTSSCPK).

Belongs to the POM121 family.

The protein is Putative POM121-like protein 1 (POM121L1P) of Homo sapiens (Human).